A 129-amino-acid chain; its full sequence is Small ribosomal subunit protein uS11 (129 aa).

This sequence belongs to the universal ribosomal protein uS11 family. In terms of assembly, part of the 30S ribosomal subunit. Interacts with proteins S7 and S18. Binds to IF-3.

Its function is as follows. Located on the platform of the 30S subunit, it bridges several disparate RNA helices of the 16S rRNA. Forms part of the Shine-Dalgarno cleft in the 70S ribosome. In Glaesserella parasuis serovar 5 (strain SH0165) (Haemophilus parasuis), this protein is Small ribosomal subunit protein uS11.